Consider the following 147-residue polypeptide: Flagellar assembly factor FliW (147 aa).

It belongs to the FliW family. Interacts with translational regulator CsrA and flagellin(s).

It localises to the cytoplasm. Functionally, acts as an anti-CsrA protein, binds CsrA and prevents it from repressing translation of its target genes, one of which is flagellin. Binds to flagellin and participates in the assembly of the flagellum. The polypeptide is Flagellar assembly factor FliW (Oceanobacillus iheyensis (strain DSM 14371 / CIP 107618 / JCM 11309 / KCTC 3954 / HTE831)).